Reading from the N-terminus, the 950-residue chain is Valine--tRNA ligase (950 aa).

Positions 40 to 50 (PNVTGSLHMGH) match the 'HIGH' region motif. The short motif at 551 to 555 (KMSKS) is the 'KMSKS' region element. Lys-554 is a binding site for ATP. Residues 881 to 950 (LIDKSAELGR…AEQRQKIAAL (70 aa)) adopt a coiled-coil conformation.

It belongs to the class-I aminoacyl-tRNA synthetase family. ValS type 1 subfamily. As to quaternary structure, monomer.

The protein resides in the cytoplasm. It carries out the reaction tRNA(Val) + L-valine + ATP = L-valyl-tRNA(Val) + AMP + diphosphate. In terms of biological role, catalyzes the attachment of valine to tRNA(Val). As ValRS can inadvertently accommodate and process structurally similar amino acids such as threonine, to avoid such errors, it has a 'posttransfer' editing activity that hydrolyzes mischarged Thr-tRNA(Val) in a tRNA-dependent manner. The polypeptide is Valine--tRNA ligase (Pseudomonas aeruginosa (strain ATCC 15692 / DSM 22644 / CIP 104116 / JCM 14847 / LMG 12228 / 1C / PRS 101 / PAO1)).